We begin with the raw amino-acid sequence, 370 residues long: Ferrochelatase (370 aa).

Fe cation is bound by residues His210 and Glu291.

This sequence belongs to the ferrochelatase family.

The protein resides in the cytoplasm. The enzyme catalyses heme b + 2 H(+) = protoporphyrin IX + Fe(2+). It functions in the pathway porphyrin-containing compound metabolism; protoheme biosynthesis; protoheme from protoporphyrin-IX: step 1/1. In terms of biological role, catalyzes the ferrous insertion into protoporphyrin IX. This chain is Ferrochelatase, found in Marinobacter nauticus (strain ATCC 700491 / DSM 11845 / VT8) (Marinobacter aquaeolei).